Reading from the N-terminus, the 298-residue chain is Tyrosine recombinase XerD (298 aa).

The Core-binding (CB) domain maps to 3-88 (SSHNNLLQNF…AIRQFYKFLK (86 aa)). A Tyr recombinase domain is found at 109 to 292 (SIPDYLTQDE…ANKTLREVHK (184 aa)). Residues arginine 149, lysine 173, histidine 244, arginine 247, and histidine 270 contribute to the active site. The active-site O-(3'-phospho-DNA)-tyrosine intermediate is the tyrosine 279.

The protein belongs to the 'phage' integrase family. XerD subfamily. As to quaternary structure, forms a cyclic heterotetrameric complex composed of two molecules of XerC and two molecules of XerD.

The protein resides in the cytoplasm. In terms of biological role, site-specific tyrosine recombinase, which acts by catalyzing the cutting and rejoining of the recombining DNA molecules. The XerC-XerD complex is essential to convert dimers of the bacterial chromosome into monomers to permit their segregation at cell division. It also contributes to the segregational stability of plasmids. The polypeptide is Tyrosine recombinase XerD (Leptospira interrogans serogroup Icterohaemorrhagiae serovar copenhageni (strain Fiocruz L1-130)).